The primary structure comprises 1373 residues: MAERANLVFHNKVIDGTAIKRLISRLIDHFGMAYTSHILDQVKTLGFQQATATSISLGIDDLLTIPSKGWLVQDAEQQSLILEKHHHYGNVHAVEKLRQSIEIWYATSEYLRQEMNPNFRMTDPFNPVHMMSFSGARGNASQVHQLVGMRGLMSDPQGQMIDLPIQSNLREGLSLTEYIISCYGARKGVVDTAVRTSDAGYLTRRLVEVVQHIVVRRTDCGTIRGISVSPRNKNRMMSERIFIQTLIGRVLADDIYIGSRCVAFRNQDLGIGLVNRLITFGTQSISIRTPFTCRSTSWICRLCYGRSPTHGDLVELGEAVGIIAGQSIGEPGTQLTLRTFHTGGVFTGGTAEHVRAPYNGKIKFNEDLVHPTRTRHGHPAFLCYMDLSVIIESEDIIHSVTIPPKSFLLVQNDQYVESEQVIAEIREGTYTFHFKERVRKYIYSDSEGEMHWSTDVSHAPEFTYSNVHLLPKTSHLWVLSGNSCGSSLILFSIHKDQDQMNIPFLSVERKSISSLSVNNDQVSQKFLSSDFADKKKSGTPYYSELNGILGTSHYNFIYSAIFHENSDLLAKRRRNRFLIPFQPIQEQEKEFIPHSGISIEIPINGIFRRNSIFAFFDDPRYRRKSSGILKYGTLKADSIIQKEDMIEYRGVQKFKTKYEMKVDRFFFIPEEVHILPESSAIMVQNYSIIGVDTRITLNIRSQVGGLIRVERKKKRIELKIFSGDIHFPDKTDKISRHSGILIPPGRGKTNAKESKKLKNWIYVQRITPTKKKFFVLVRPVATYEIADSINLATLFPQDLFREKDNIQLRVFNYILYGNGKPTRGISDTSIQLVRTCLVLNWDQDNKNSSLEEVRAFFVEVSTKGLIRDFIRIGLVKSHISYIRKRNNPPDSGWISADHMNPFYSISPKADILQQSLRQNHGTIRMFLNRNKESQSLLILSSSNCFRIGPFNHVKYHNVINQSIKKKPLITIKNSPGPLGTSIPISNFYSFLPLLTYNQISVIKYLQLDNLKYIFQVINSYLIDEKGRILNLDPYSNVVLNPIKLNWYFLHQNYYHNYCAETSTIISLGQFFCENVCIAKKEPHLKSGQVLIVQRDSVVIRSAKPYLATPGAKVHGHYREILYEGDTLVTFIYEKSRSGDITQGLPKVEQVLEVRSIDSISLNLEKRIKGWNKCITRILGIPWGFLIGAELTIVQSRISLVNKIQKVYRSQGVQIHNRHIEIIVRQITSKVLVSEEGMSNVFLPGELIGLLRAERTGRALEEAICYRAVLLGITRASLNTQSFISEASFQETARVLAKAALRGRIDWLKGLKENVVLGGVIPAGTGFNKGLVHCSRQHTNILLEKKTKNLSLFEGDMRDILFYHREFCDSSISK.

The Zn(2+) site is built by cysteine 220, cysteine 293, cysteine 300, and cysteine 303.

The protein belongs to the RNA polymerase beta' chain family. RpoC2 subfamily. In plastids the minimal PEP RNA polymerase catalytic core is composed of four subunits: alpha, beta, beta', and beta''. When a (nuclear-encoded) sigma factor is associated with the core the holoenzyme is formed, which can initiate transcription. The cofactor is Zn(2+).

The protein localises to the plastid. It is found in the chloroplast. The enzyme catalyses RNA(n) + a ribonucleoside 5'-triphosphate = RNA(n+1) + diphosphate. Its function is as follows. DNA-dependent RNA polymerase catalyzes the transcription of DNA into RNA using the four ribonucleoside triphosphates as substrates. This Lepidium virginicum (Virginia pepperweed) protein is DNA-directed RNA polymerase subunit beta''.